The following is a 333-amino-acid chain: DNA-directed RNA polymerase subunit alpha (333 aa).

The alpha N-terminal domain (alpha-NTD) stretch occupies residues 1-233 (MVQEKLRFST…DLFIPFLHAE (233 aa)). The alpha C-terminal domain (alpha-CTD) stretch occupies residues 266-333 (KKEIALKSIF…DILKIQKYFT (68 aa)).

The protein belongs to the RNA polymerase alpha chain family. In terms of assembly, in plastids the minimal PEP RNA polymerase catalytic core is composed of four subunits: alpha, beta, beta', and beta''. When a (nuclear-encoded) sigma factor is associated with the core the holoenzyme is formed, which can initiate transcription.

Its subcellular location is the plastid. It localises to the chloroplast. The enzyme catalyses RNA(n) + a ribonucleoside 5'-triphosphate = RNA(n+1) + diphosphate. Functionally, DNA-dependent RNA polymerase catalyzes the transcription of DNA into RNA using the four ribonucleoside triphosphates as substrates. This is DNA-directed RNA polymerase subunit alpha from Phaseolus angularis (Azuki bean).